The sequence spans 658 residues: Cysteine-rich receptor-like protein kinase 36 (658 aa).

The signal sequence occupies residues 1-26 (MERSNLFHIPCFLLLFLLFNINGVHT). Gnk2-homologous domains are found at residues 27–128 (TFVC…NIHR) and 139–246 (NVPH…DYRF). Over 27 to 281 (TFVCGDEDFS…KKGRMFQPWS (255 aa)) the chain is Extracellular. N-linked (GlcNAc...) asparagine glycosylation is found at asparagine 38, asparagine 64, asparagine 116, asparagine 150, and asparagine 163. The chain crosses the membrane as a helical span at residues 282–302 (VVVVVFPTGINLAVFVAFVLA). Residues 303-658 (YRRMRRRIYT…EVSITVLYPR (356 aa)) are Cytoplasmic-facing. Positions 340–612 (FSLENKLGQG…ITWLARDGTF (273 aa)) constitute a Protein kinase domain. ATP is bound by residues 346-354 (LGQGGFGSV) and lysine 368. Tyrosine 413 carries the post-translational modification Phosphotyrosine. The active-site Proton acceptor is the aspartate 465. The residue at position 469 (serine 469) is a Phosphoserine. Threonine 505 bears the Phosphothreonine mark. Tyrosine 513 carries the post-translational modification Phosphotyrosine.

The protein belongs to the protein kinase superfamily. Ser/Thr protein kinase family. CRK subfamily. Interacts with CRK45. In terms of processing, autophosphorylated.

It localises to the cell membrane. The catalysed reaction is L-seryl-[protein] + ATP = O-phospho-L-seryl-[protein] + ADP + H(+). The enzyme catalyses L-threonyl-[protein] + ATP = O-phospho-L-threonyl-[protein] + ADP + H(+). Functionally, forms a complex with CRK45 that may negatively control abscisic acid (ABA) and osmotic stress signal transduction. Can phosphorylate CRK45 in vitro. In Arabidopsis thaliana (Mouse-ear cress), this protein is Cysteine-rich receptor-like protein kinase 36.